The following is a 529-amino-acid chain: Bifunctional purine biosynthesis protein PurH (529 aa).

Residues Thr-2–Thr-149 enclose the MGS-like domain.

It belongs to the PurH family.

The catalysed reaction is (6R)-10-formyltetrahydrofolate + 5-amino-1-(5-phospho-beta-D-ribosyl)imidazole-4-carboxamide = 5-formamido-1-(5-phospho-D-ribosyl)imidazole-4-carboxamide + (6S)-5,6,7,8-tetrahydrofolate. It carries out the reaction IMP + H2O = 5-formamido-1-(5-phospho-D-ribosyl)imidazole-4-carboxamide. It functions in the pathway purine metabolism; IMP biosynthesis via de novo pathway; 5-formamido-1-(5-phospho-D-ribosyl)imidazole-4-carboxamide from 5-amino-1-(5-phospho-D-ribosyl)imidazole-4-carboxamide (10-formyl THF route): step 1/1. The protein operates within purine metabolism; IMP biosynthesis via de novo pathway; IMP from 5-formamido-1-(5-phospho-D-ribosyl)imidazole-4-carboxamide: step 1/1. The polypeptide is Bifunctional purine biosynthesis protein PurH (Dinoroseobacter shibae (strain DSM 16493 / NCIMB 14021 / DFL 12)).